A 477-amino-acid chain; its full sequence is RNA pseudouridine synthase 6, chloroplastic (477 aa).

A chloroplast-targeting transit peptide spans 1-52; that stretch reads MPKAAASLASLLPQLWHRPVQPPPFLHRALSSSSPLLRRHRAALHSPAAPLS. Residues 98 to 205 form the S4 RNA-binding domain; that stretch reads EVAVDFISRS…FPRCYEIDWK (108 aa). Asp-258 is a catalytic residue.

Belongs to the pseudouridine synthase RluA family.

The protein resides in the plastid. It is found in the chloroplast. It catalyses the reaction a uridine in RNA = a pseudouridine in RNA. The sequence is that of RNA pseudouridine synthase 6, chloroplastic from Oryza sativa subsp. japonica (Rice).